A 227-amino-acid chain; its full sequence is Iron-regulated surface determinant protein C (227 aa).

Residues 1-28 (MKNILKVFNTTILALIIIIATFSNSANA) form the signal peptide. Residues 29–150 (ADSGTLNYEV…KFNGPTDVAG (122 aa)) enclose the NEAT domain. 4 residues coordinate heme: Ser47, Ile48, Tyr132, and Tyr136. The disordered stretch occupies residues 149 to 191 (AGANAPGKDDKNSASGSDKGSDGATTGQSESNSSNKDKVENPQ). A compositionally biased stretch (low complexity) spans 161–172 (SASGSDKGSDGA). Positions 173-182 (TTGQSESNSS) are enriched in polar residues. An NPQTN sorting signal motif is present at residues 189–193 (NPQTN). At Thr192 the chain carries Pentaglycyl murein peptidoglycan amidated threonine. Positions 193–227 (NAGTPAYIYAIPVASLALLIAITLFVRKKSKGNVE) are cleaved as a propeptide — removed by sortase B.

This sequence belongs to the IsdC family. Monomer. Interacts with IsdA.

The protein resides in the secreted. It is found in the cell wall. Functionally, involved in heme (porphyrin) scavenging. Binds hemoglobin and almost exclusively free-base protoporphyrin IX. Probably has a role as the central conduit of the isd heme uptake system, i.e. mediates the transfer of the iron-containing nutrient from IsdABH to the membrane translocation system IsdDEF. Hemin-free IsdC (apo-IsdC) acquires hemin from hemin-containing IsdA (holo-IsdA) probably through the activated holo-IsdA-apo-IsdC complex and due to the higher affinity of apo-IsdC for the cofactor. The reaction is reversible. The protein is Iron-regulated surface determinant protein C (isdC) of Staphylococcus aureus (strain bovine RF122 / ET3-1).